The following is a 91-amino-acid chain: MNENIIPLNRHTQEIPTTESVIKNSGNSEVHIDIHIDTMPIAFAILCSALAAKQMTKEEFDMAYTQLREMNRENNSRSSVKQIINQETEEE.

Residues 71–91 (NRENNSRSSVKQIINQETEEE) are disordered. Positions 76–91 (SRSSVKQIINQETEEE) are enriched in polar residues.

This is an uncharacterized protein from Bacillus subtilis (strain 168).